The sequence spans 248 residues: tRNA (guanine-N(1)-)-methyltransferase (248 aa).

S-adenosyl-L-methionine is bound by residues glycine 113 and 133 to 138 (IGDFVL).

The protein belongs to the RNA methyltransferase TrmD family. Homodimer.

It localises to the cytoplasm. It catalyses the reaction guanosine(37) in tRNA + S-adenosyl-L-methionine = N(1)-methylguanosine(37) in tRNA + S-adenosyl-L-homocysteine + H(+). Specifically methylates guanosine-37 in various tRNAs. The protein is tRNA (guanine-N(1)-)-methyltransferase of Dehalococcoides mccartyi (strain CBDB1).